The chain runs to 215 residues: Ribosomal RNA small subunit methyltransferase G (215 aa).

S-adenosyl-L-methionine contacts are provided by residues Gly-77, Phe-82, 130 to 131 (IE), and Arg-146.

This sequence belongs to the methyltransferase superfamily. RNA methyltransferase RsmG family.

Its subcellular location is the cytoplasm. It carries out the reaction guanosine(527) in 16S rRNA + S-adenosyl-L-methionine = N(7)-methylguanosine(527) in 16S rRNA + S-adenosyl-L-homocysteine. Specifically methylates the N7 position of guanine in position 527 of 16S rRNA. This chain is Ribosomal RNA small subunit methyltransferase G, found in Bartonella bacilliformis (strain ATCC 35685 / KC583 / Herrer 020/F12,63).